We begin with the raw amino-acid sequence, 631 residues long: Probable glutamate--tRNA ligase, cytoplasmic (631 aa).

139-141 contacts L-glutamate; sequence RFP. The 'HIGH' region signature appears at 144–153; that stretch reads PSGFLHIGHI. H149 is a binding site for ATP. Residues D173, 311 to 315, and R329 each bind L-glutamate; that span reads YDFAC. Residues E332 and 367 to 371 each bind ATP; that span reads VLSKR. The 'KMSKS' region signature appears at 367-371; sequence VLSKR.

The protein belongs to the class-I aminoacyl-tRNA synthetase family. Glutamate--tRNA ligase type 2 subfamily.

It localises to the cytoplasm. It catalyses the reaction tRNA(Glu) + L-glutamate + ATP = L-glutamyl-tRNA(Glu) + AMP + diphosphate. The sequence is that of Probable glutamate--tRNA ligase, cytoplasmic from Enterocytozoon bieneusi (strain H348) (Microsporidian parasite).